The chain runs to 99 residues: DNA-directed RNA polymerase subunit omega (99 aa).

Belongs to the RNA polymerase subunit omega family. The RNAP catalytic core consists of 2 alpha, 1 beta, 1 beta' and 1 omega subunit. When a sigma factor is associated with the core the holoenzyme is formed, which can initiate transcription.

It carries out the reaction RNA(n) + a ribonucleoside 5'-triphosphate = RNA(n+1) + diphosphate. Promotes RNA polymerase assembly. Latches the N- and C-terminal regions of the beta' subunit thereby facilitating its interaction with the beta and alpha subunits. This chain is DNA-directed RNA polymerase subunit omega, found in Xanthomonas axonopodis pv. citri (strain 306).